The following is a 593-amino-acid chain: Adenine deaminase 2 (593 aa).

It belongs to the metallo-dependent hydrolases superfamily. Adenine deaminase family. The cofactor is Mn(2+).

The catalysed reaction is adenine + H2O + H(+) = hypoxanthine + NH4(+). The polypeptide is Adenine deaminase 2 (Rhizobium meliloti (strain 1021) (Ensifer meliloti)).